The following is a 136-amino-acid chain: Small nuclear ribonucleoprotein Sm D3 (136 aa).

The Sm domain maps to 6 to 78; it reads VPIKILHEAE…IRFMILPDML (73 aa). The disordered stretch occupies residues 98–136; that stretch reads GLGGLDQRGRGRGTAFRRPMGRGGPRGMSRPGGAPTFRG.

The protein belongs to the snRNP core protein family.

The protein resides in the nucleus. It is found in the cytoplasm. The protein localises to the cytosol. Its function is as follows. Plays a role in pre-mRNA splicing as a core component of the spliceosomal U1, U2, U4 and U5 small nuclear ribonucleoproteins (snRNPs), the building blocks of the spliceosome. This chain is Small nuclear ribonucleoprotein Sm D3 (snr-1), found in Caenorhabditis elegans.